We begin with the raw amino-acid sequence, 84 residues long: Small ribosomal subunit protein uS17 (84 aa).

This sequence belongs to the universal ribosomal protein uS17 family. As to quaternary structure, part of the 30S ribosomal subunit.

In terms of biological role, one of the primary rRNA binding proteins, it binds specifically to the 5'-end of 16S ribosomal RNA. The polypeptide is Small ribosomal subunit protein uS17 (Vibrio parahaemolyticus serotype O3:K6 (strain RIMD 2210633)).